The sequence spans 210 residues: Pyridoxine/pyridoxamine 5'-phosphate oxidase (210 aa).

Substrate is bound by residues 7 to 10 (REDY) and lysine 65. Residues 60-65 (RMVLLK), 75-76 (FT), arginine 81, lysine 82, and glutamine 104 contribute to the FMN site. Substrate is bound by residues tyrosine 122, arginine 126, and serine 130. FMN contacts are provided by residues 139–140 (QS) and tryptophan 183. 189 to 191 (RLH) serves as a coordination point for substrate. Residue arginine 193 coordinates FMN.

The protein belongs to the pyridoxamine 5'-phosphate oxidase family. As to quaternary structure, homodimer. It depends on FMN as a cofactor.

It carries out the reaction pyridoxamine 5'-phosphate + O2 + H2O = pyridoxal 5'-phosphate + H2O2 + NH4(+). The enzyme catalyses pyridoxine 5'-phosphate + O2 = pyridoxal 5'-phosphate + H2O2. The protein operates within cofactor metabolism; pyridoxal 5'-phosphate salvage; pyridoxal 5'-phosphate from pyridoxamine 5'-phosphate: step 1/1. It participates in cofactor metabolism; pyridoxal 5'-phosphate salvage; pyridoxal 5'-phosphate from pyridoxine 5'-phosphate: step 1/1. In terms of biological role, catalyzes the oxidation of either pyridoxine 5'-phosphate (PNP) or pyridoxamine 5'-phosphate (PMP) into pyridoxal 5'-phosphate (PLP). The protein is Pyridoxine/pyridoxamine 5'-phosphate oxidase of Neisseria gonorrhoeae (strain ATCC 700825 / FA 1090).